The following is a 689-amino-acid chain: Ribonuclease J (689 aa).

The segment at 1-88 (MTDNNQNNEN…RNYAQEELDS (88 aa)) is disordered. The span at 9 to 24 (ENHENSSENSKADEMR) shows a compositional bias: basic and acidic residues. The segment covering 56 to 78 (HHKKEHRPNKKPNNHHKQKHAKT) has biased composition (basic residues). Residues K132 and K138 each carry the N6-acetyllysine modification. Positions 206, 208, 210, 211, 275, and 297 each coordinate Zn(2+). Residues K321, K335, and K395 each carry the N6-acetyllysine modification. Residue 498–502 (HVSGH) participates in substrate binding. Residue K509 is modified to N6-acetyllysine. H524 is a binding site for Zn(2+). N6-acetyllysine occurs at positions 545, 632, and 647.

It belongs to the metallo-beta-lactamase superfamily. RNA-metabolizing metallo-beta-lactamase-like family. Bacterial RNase J subfamily. Homodimer. Homotetramer; dimer of homodimers. Interacts with RNA helicase RhpA, might be a member of a minimal RNA degradosome complex. It depends on Zn(2+) as a cofactor. Acetylated on nine lysine residues. Some of the residues are acetylated by multiple different mechanisms. RimL is partially responsible for the acetylation of Lys-321, Lys-395 and Lys-647. HPB8_1270 homolog is partially responsible for the acetylation of Lys-321, Lys-395, Lys-509 and Lys-647. Acetyl-phosphate-mediated non-enzymatic acetylation pathway takes part in the acetylation of Lys-132, Lys-321, Lys-395, Lys-509 and Lys-647. Acetylation of the remaining residues Lys-138, Lys-335, Lys-545 and Lys-632 occurs by a yet undetermined mechanism. Acetylation on a number of these residues is important for growth regulation and proper cell morphology.

The protein localises to the cytoplasm. With respect to regulation, catalytic activity is regulated by the balance between homodimers and homotetramers, with homotetramers being the active forms of this enzyme. Acetylation allosterically regulates the homooligomerization state and hence the catalytic activity. Functionally, an RNase that has 5'-3' exoribonuclease and endoribonuclease activity. Degrades 5'-monophosphorylated ssRNA and dsRNA, considerably more active on ssRNA. Association with RhpA significantly increases the dsRNase activity. Degrades RNA substrate with hairpin structures at both ends with low activity, but presence of RhpA significantly increases the activity on this substrate. Stimulates ATPase activity of RNA helicase RhpA. Involved in stabilization of mRNA but apparently not rRNA. The polypeptide is Ribonuclease J (Helicobacter pylori (strain ATCC 700392 / 26695) (Campylobacter pylori)).